Consider the following 259-residue polypeptide: Deoxyribose-phosphate aldolase (259 aa).

Asp-102 serves as the catalytic Proton donor/acceptor. The active-site Schiff-base intermediate with acetaldehyde is Lys-167. The Proton donor/acceptor role is filled by Lys-201.

The protein belongs to the DeoC/FbaB aldolase family. DeoC type 2 subfamily.

It localises to the cytoplasm. The catalysed reaction is 2-deoxy-D-ribose 5-phosphate = D-glyceraldehyde 3-phosphate + acetaldehyde. It participates in carbohydrate degradation; 2-deoxy-D-ribose 1-phosphate degradation; D-glyceraldehyde 3-phosphate and acetaldehyde from 2-deoxy-alpha-D-ribose 1-phosphate: step 2/2. Functionally, catalyzes a reversible aldol reaction between acetaldehyde and D-glyceraldehyde 3-phosphate to generate 2-deoxy-D-ribose 5-phosphate. The polypeptide is Deoxyribose-phosphate aldolase (Cronobacter sakazakii (strain ATCC BAA-894) (Enterobacter sakazakii)).